Here is a 422-residue protein sequence, read N- to C-terminus: Enolase (422 aa).

Q161 contacts (2R)-2-phosphoglycerate. Residue E203 is the Proton donor of the active site. Mg(2+) is bound by residues D240, E283, and D310. (2R)-2-phosphoglycerate contacts are provided by K335, R364, S365, and K386. Catalysis depends on K335, which acts as the Proton acceptor.

The protein belongs to the enolase family. Mg(2+) is required as a cofactor.

The protein localises to the cytoplasm. The protein resides in the secreted. It localises to the cell surface. It carries out the reaction (2R)-2-phosphoglycerate = phosphoenolpyruvate + H2O. Its pathway is carbohydrate degradation; glycolysis; pyruvate from D-glyceraldehyde 3-phosphate: step 4/5. Its function is as follows. Catalyzes the reversible conversion of 2-phosphoglycerate (2-PG) into phosphoenolpyruvate (PEP). It is essential for the degradation of carbohydrates via glycolysis. In Deinococcus geothermalis (strain DSM 11300 / CIP 105573 / AG-3a), this protein is Enolase.